Consider the following 622-residue polypeptide: Threonine--tRNA ligase (622 aa).

The editing domain stretch occupies residues 1 to 136; the sequence is MKTLLIHSDY…PLSELSRKIT (136 aa). The segment at 199-498 is catalytic; it reads PHVKYIKEKE…TLENKPPALP (300 aa). Zn(2+) contacts are provided by C291, H343, and H467.

This sequence belongs to the class-II aminoacyl-tRNA synthetase family. As to quaternary structure, homodimer. Requires Zn(2+) as cofactor.

It is found in the cytoplasm. The enzyme catalyses tRNA(Thr) + L-threonine + ATP = L-threonyl-tRNA(Thr) + AMP + diphosphate + H(+). In terms of biological role, catalyzes the attachment of threonine to tRNA(Thr) in a two-step reaction: L-threonine is first activated by ATP to form Thr-AMP and then transferred to the acceptor end of tRNA(Thr). Also edits incorrectly charged L-seryl-tRNA(Thr). In Methanococcus maripaludis (strain DSM 14266 / JCM 13030 / NBRC 101832 / S2 / LL), this protein is Threonine--tRNA ligase.